The sequence spans 165 residues: 2-C-methyl-D-erythritol 2,4-cyclodiphosphate synthase (165 aa).

D12 and H14 together coordinate a divalent metal cation. 4-CDP-2-C-methyl-D-erythritol 2-phosphate is bound by residues 12–14 (DIH) and 38–39 (HS). A divalent metal cation is bound at residue H46. 4-CDP-2-C-methyl-D-erythritol 2-phosphate contacts are provided by residues 60–62 (DIG), 136–139 (TTNE), and R146.

The protein belongs to the IspF family. In terms of assembly, homotrimer. Requires a divalent metal cation as cofactor.

The enzyme catalyses 4-CDP-2-C-methyl-D-erythritol 2-phosphate = 2-C-methyl-D-erythritol 2,4-cyclic diphosphate + CMP. The protein operates within isoprenoid biosynthesis; isopentenyl diphosphate biosynthesis via DXP pathway; isopentenyl diphosphate from 1-deoxy-D-xylulose 5-phosphate: step 4/6. Functionally, involved in the biosynthesis of isopentenyl diphosphate (IPP) and dimethylallyl diphosphate (DMAPP), two major building blocks of isoprenoid compounds. Catalyzes the conversion of 4-diphosphocytidyl-2-C-methyl-D-erythritol 2-phosphate (CDP-ME2P) to 2-C-methyl-D-erythritol 2,4-cyclodiphosphate (ME-CPP) with a corresponding release of cytidine 5-monophosphate (CMP). The sequence is that of 2-C-methyl-D-erythritol 2,4-cyclodiphosphate synthase from Nostoc sp. (strain PCC 7120 / SAG 25.82 / UTEX 2576).